We begin with the raw amino-acid sequence, 428 residues long: Adenylosuccinate synthetase (428 aa).

Residues 12 to 18 (GDEGKGK) and 40 to 42 (GHT) each bind GTP. The Proton acceptor role is filled by aspartate 13. Mg(2+) contacts are provided by aspartate 13 and glycine 40. Residues 13-16 (DEGK), 38-41 (NAGH), threonine 128, arginine 142, glutamine 222, threonine 237, and arginine 301 each bind IMP. Histidine 41 (proton donor) is an active-site residue. 297-303 (VNTGRAR) lines the substrate pocket. Residues arginine 303, 329 to 331 (KLD), and 411 to 413 (STS) each bind GTP.

The protein belongs to the adenylosuccinate synthetase family. As to quaternary structure, homodimer. Requires Mg(2+) as cofactor.

Its subcellular location is the cytoplasm. The enzyme catalyses IMP + L-aspartate + GTP = N(6)-(1,2-dicarboxyethyl)-AMP + GDP + phosphate + 2 H(+). The protein operates within purine metabolism; AMP biosynthesis via de novo pathway; AMP from IMP: step 1/2. Plays an important role in the de novo pathway of purine nucleotide biosynthesis. Catalyzes the first committed step in the biosynthesis of AMP from IMP. In Caulobacter sp. (strain K31), this protein is Adenylosuccinate synthetase.